Consider the following 253-residue polypeptide: Cyclin-C1-1 (253 aa).

It belongs to the cyclin family. Cyclin C subfamily.

The chain is Cyclin-C1-1 (CYCC1-1) from Arabidopsis thaliana (Mouse-ear cress).